Reading from the N-terminus, the 308-residue chain is Cobalamin biosynthesis protein CobD (308 aa).

The next 6 helical transmembrane spans lie at 1-21, 50-70, 71-91, 151-171, 202-222, and 284-304; these read MEIL…GDPP, FVYG…PVYF, LLDW…AILF, IGDG…PGVM, VLNF…SFFG, and LVLI…VIYF.

The protein belongs to the CobD/CbiB family.

It is found in the cell membrane. The protein operates within cofactor biosynthesis; adenosylcobalamin biosynthesis. Its function is as follows. Converts cobyric acid to cobinamide by the addition of aminopropanol on the F carboxylic group. The sequence is that of Cobalamin biosynthesis protein CobD from Dehalococcoides mccartyi (strain CBDB1).